The primary structure comprises 519 residues: UvrABC system protein C (519 aa).

One can recognise a GIY-YIG domain in the interval 9–87 (HLPGCYLFKN…IKKHWPRYNI (79 aa)). The UVR domain occupies 191-226 (RELIESMEKDMRELASRQQFEQAMALRDEIAALEYL).

Belongs to the UvrC family. In terms of assembly, interacts with UvrB in an incision complex.

Its subcellular location is the cytoplasm. Its function is as follows. The UvrABC repair system catalyzes the recognition and processing of DNA lesions. UvrC both incises the 5' and 3' sides of the lesion. The N-terminal half is responsible for the 3' incision and the C-terminal half is responsible for the 5' incision. This is UvrABC system protein C from Methanosarcina barkeri (strain Fusaro / DSM 804).